We begin with the raw amino-acid sequence, 117 residues long: Cuticular protein 47Eg (117 aa).

An N-terminal signal peptide occupies residues 1 to 16 (MKFFIAFACLLAVALA). Residues 31–97 (VDGFAYAVEL…SANPPLPTPP (67 aa)) enclose the Chitin-binding type R&amp;R domain.

In terms of biological role, component of the larval cuticle. This is Cuticular protein 47Eg (Cpr47Eg) from Drosophila melanogaster (Fruit fly).